Reading from the N-terminus, the 300-residue chain is TLR adapter interacting with SLC15A4 on the lysosome (300 aa).

The pLxIS motif signature appears at 289–293 (SLHIS). At Ser293 the chain carries Phosphoserine.

In terms of assembly, interacts (via pLxIS motif) with IRF5; leading to IRF5 activation. Interacts with SLC15A4; leading to its recruitment to endolysosome. Post-translationally, the phosphorylated pLxIS motif constitutes an IRF5-binding motif, leading to recruitment of the transcription factor IRF5 to induce type-I interferons and other cytokines.

It localises to the lysosome membrane. Its subcellular location is the endosome membrane. It is found in the nucleus. The protein localises to the cytoplasm. Its function is as follows. Innate immune adapter that mediates the recruitment and activation of IRF5 downstream of endolysosomal toll-like receptors TLR7, TLR8 and TLR9. Following recruitment to endolysosome by SLC15A4 downstream of TLR7, TLR8 and TLR9, specifically recruits IRF5 transcription factor via its pLxIS motif, leading to IRF5 activation and subsequent expression of type I interferons. Plays a role in the regulation of endolysosomal pH in immune cells such as B-cells, dendritic cells and monocytes. In Bos taurus (Bovine), this protein is TLR adapter interacting with SLC15A4 on the lysosome.